A 177-amino-acid polypeptide reads, in one-letter code: ATP synthase subunit delta (177 aa).

It belongs to the ATPase delta chain family. In terms of assembly, F-type ATPases have 2 components, F(1) - the catalytic core - and F(0) - the membrane proton channel. F(1) has five subunits: alpha(3), beta(3), gamma(1), delta(1), epsilon(1). F(0) has three main subunits: a(1), b(2) and c(10-14). The alpha and beta chains form an alternating ring which encloses part of the gamma chain. F(1) is attached to F(0) by a central stalk formed by the gamma and epsilon chains, while a peripheral stalk is formed by the delta and b chains.

The protein localises to the cell inner membrane. Functionally, f(1)F(0) ATP synthase produces ATP from ADP in the presence of a proton or sodium gradient. F-type ATPases consist of two structural domains, F(1) containing the extramembraneous catalytic core and F(0) containing the membrane proton channel, linked together by a central stalk and a peripheral stalk. During catalysis, ATP synthesis in the catalytic domain of F(1) is coupled via a rotary mechanism of the central stalk subunits to proton translocation. This protein is part of the stalk that links CF(0) to CF(1). It either transmits conformational changes from CF(0) to CF(1) or is implicated in proton conduction. This Sodalis glossinidius (strain morsitans) protein is ATP synthase subunit delta.